A 393-amino-acid chain; its full sequence is Elongation factor Tu (393 aa).

In terms of domain architecture, tr-type G spans 10–203 (KPHVNIGTIG…AVDEFIPEPL (194 aa)). The G1 stretch occupies residues 19–26 (GHVDHGKT). 19–26 (GHVDHGKT) provides a ligand contact to GTP. Thr26 is a Mg(2+) binding site. A G2 region spans residues 60–64 (GITIS). The tract at residues 81–84 (DCPG) is G3. GTP-binding positions include 81-85 (DCPGH) and 136-139 (NKVD). Positions 136–139 (NKVD) are G4. The G5 stretch occupies residues 173-175 (SAL).

This sequence belongs to the TRAFAC class translation factor GTPase superfamily. Classic translation factor GTPase family. EF-Tu/EF-1A subfamily. In terms of assembly, monomer.

The protein resides in the cytoplasm. The enzyme catalyses GTP + H2O = GDP + phosphate + H(+). GTP hydrolase that promotes the GTP-dependent binding of aminoacyl-tRNA to the A-site of ribosomes during protein biosynthesis. The protein is Elongation factor Tu of Chlorobium phaeobacteroides (strain DSM 266 / SMG 266 / 2430).